The chain runs to 463 residues: Bifunctional protein HldE (463 aa).

Residues 1–315 (MKKILVIGDL…LILNQTHPKI (315 aa)) form a ribokinase region. 191-194 (NRAE) contacts ATP. D260 is an active-site residue. The cytidylyltransferase stretch occupies residues 334-463 (FTNGCFDILH…IEKIKRTHND (130 aa)).

The protein in the N-terminal section; belongs to the carbohydrate kinase PfkB family. In the C-terminal section; belongs to the cytidylyltransferase family. As to quaternary structure, homodimer.

The catalysed reaction is D-glycero-beta-D-manno-heptose 7-phosphate + ATP = D-glycero-beta-D-manno-heptose 1,7-bisphosphate + ADP + H(+). The enzyme catalyses D-glycero-beta-D-manno-heptose 1-phosphate + ATP + H(+) = ADP-D-glycero-beta-D-manno-heptose + diphosphate. The protein operates within nucleotide-sugar biosynthesis; ADP-L-glycero-beta-D-manno-heptose biosynthesis; ADP-L-glycero-beta-D-manno-heptose from D-glycero-beta-D-manno-heptose 7-phosphate: step 1/4. It participates in nucleotide-sugar biosynthesis; ADP-L-glycero-beta-D-manno-heptose biosynthesis; ADP-L-glycero-beta-D-manno-heptose from D-glycero-beta-D-manno-heptose 7-phosphate: step 3/4. It functions in the pathway bacterial outer membrane biogenesis; LPS core biosynthesis. Catalyzes the phosphorylation of D-glycero-D-manno-heptose 7-phosphate at the C-1 position to selectively form D-glycero-beta-D-manno-heptose-1,7-bisphosphate. Its function is as follows. Catalyzes the ADP transfer from ATP to D-glycero-beta-D-manno-heptose 1-phosphate, yielding ADP-D-glycero-beta-D-manno-heptose. The polypeptide is Bifunctional protein HldE (Helicobacter pylori (strain J99 / ATCC 700824) (Campylobacter pylori J99)).